The following is a 281-amino-acid chain: Acetyl-coenzyme A carboxylase carboxyl transferase subunit beta (281 aa).

The tract at residues 1–23 is disordered; the sequence is MAWFKREKKGISTSTEEKKEAPD. A CoA carboxyltransferase N-terminal domain is found at 25-281; sequence LWNKCPNCKK…LAAFLKMMKN (257 aa). Zn(2+)-binding residues include cysteine 29, cysteine 32, cysteine 48, and cysteine 51. The segment at 29–51 adopts a C4-type zinc-finger fold; the sequence is CPNCKKALHSADLLENKYVCQYC.

This sequence belongs to the AccD/PCCB family. In terms of assembly, acetyl-CoA carboxylase is a heterohexamer composed of biotin carboxyl carrier protein (AccB), biotin carboxylase (AccC) and two subunits each of ACCase subunit alpha (AccA) and ACCase subunit beta (AccD). Zn(2+) is required as a cofactor.

It localises to the cytoplasm. The enzyme catalyses N(6)-carboxybiotinyl-L-lysyl-[protein] + acetyl-CoA = N(6)-biotinyl-L-lysyl-[protein] + malonyl-CoA. The protein operates within lipid metabolism; malonyl-CoA biosynthesis; malonyl-CoA from acetyl-CoA: step 1/1. Functionally, component of the acetyl coenzyme A carboxylase (ACC) complex. Biotin carboxylase (BC) catalyzes the carboxylation of biotin on its carrier protein (BCCP) and then the CO(2) group is transferred by the transcarboxylase to acetyl-CoA to form malonyl-CoA. The chain is Acetyl-coenzyme A carboxylase carboxyl transferase subunit beta from Pedobacter heparinus (strain ATCC 13125 / DSM 2366 / CIP 104194 / JCM 7457 / NBRC 12017 / NCIMB 9290 / NRRL B-14731 / HIM 762-3).